A 42-amino-acid polypeptide reads, in one-letter code: Photosystem II reaction center protein J (42 aa).

The chain crosses the membrane as a helical span at residues 10 to 30 (IPLWLVGTVVGLLAIGLLALF).

The protein belongs to the PsbJ family. In terms of assembly, PSII is composed of 1 copy each of membrane proteins PsbA, PsbB, PsbC, PsbD, PsbE, PsbF, PsbH, PsbI, PsbJ, PsbK, PsbL, PsbM, PsbT, PsbX, PsbY, PsbZ, Psb30/Ycf12, at least 3 peripheral proteins of the oxygen-evolving complex and a large number of cofactors. It forms dimeric complexes.

It localises to the plastid. The protein localises to the chloroplast thylakoid membrane. One of the components of the core complex of photosystem II (PSII). PSII is a light-driven water:plastoquinone oxidoreductase that uses light energy to abstract electrons from H(2)O, generating O(2) and a proton gradient subsequently used for ATP formation. It consists of a core antenna complex that captures photons, and an electron transfer chain that converts photonic excitation into a charge separation. The protein is Photosystem II reaction center protein J of Mesostigma viride (Green alga).